A 314-amino-acid polypeptide reads, in one-letter code: Olfactory receptor 51I1 (314 aa).

At 1 to 27 the chain is on the extracellular side; that stretch reads MLGLNGTPFQPATLQLTGIPGIQTGLT. A helical transmembrane segment spans residues 28 to 48; the sequence is WVALIFCILYMISIVGNLSIL. The Cytoplasmic portion of the chain corresponds to 49-56; the sequence is TLVFWEPA. The chain crosses the membrane as a helical span at residues 57–77; that stretch reads LHQPMYYFLSMLALNDLGVSF. Topologically, residues 78-101 are extracellular; the sequence is STLPTVISTFCFNYNHVAFNACLV. A disulfide bridge links C99 with C191. Residues 102 to 122 traverse the membrane as a helical segment; sequence QMFFIHTFSFMESGILLAMSL. Residues 123 to 141 lie on the Cytoplasmic side of the membrane; sequence DRFVAICYPLRYVTVLTHN. Residues 142-162 form a helical membrane-spanning segment; sequence RILAMGLGILTKSFTTLFPFP. Over 163 to 198 the chain is Extracellular; the sequence is FVVKRLPFCKGNVLHHSYCLHPDLMKVACGDIHVNN. The helical transmembrane segment at 199–219 threads the bilayer; the sequence is IYGLLVIIFTYGMDSTFILLS. At 220-239 the chain is on the cytoplasmic side; the sequence is YALILRAMLVIISQEQRLKA. A helical membrane pass occupies residues 240–260; sequence LNTCMSHICAVLAFYVPIIAV. Residues 261 to 275 lie on the Extracellular side of the membrane; sequence SMIHRFWKSAPPVVH. Residues 276–296 traverse the membrane as a helical segment; it reads VMMSNVYLFVPPMLNPIIYSV. The Cytoplasmic segment spans residues 297 to 314; the sequence is KTKEIRKGILKFFHKSQA.

Belongs to the G-protein coupled receptor 1 family.

Its subcellular location is the cell membrane. Odorant receptor. This Homo sapiens (Human) protein is Olfactory receptor 51I1 (OR51I1).